Reading from the N-terminus, the 633-residue chain is Threonine--tRNA ligase (633 aa).

Residues 1–59 (MIRITFSAEQKVKEYSGKVTGFDILQPDVLKEAIAFKVNGELHDLSREIEADAEIEVIQ) form the TGS domain. The tract at residues 240–532 (DHRKIAKDMD…LIENYAGKFP (293 aa)) is catalytic. Zn(2+) is bound by residues Cys332, His383, and His509.

Belongs to the class-II aminoacyl-tRNA synthetase family. As to quaternary structure, homodimer. The cofactor is Zn(2+).

The protein localises to the cytoplasm. It catalyses the reaction tRNA(Thr) + L-threonine + ATP = L-threonyl-tRNA(Thr) + AMP + diphosphate + H(+). In terms of biological role, catalyzes the attachment of threonine to tRNA(Thr) in a two-step reaction: L-threonine is first activated by ATP to form Thr-AMP and then transferred to the acceptor end of tRNA(Thr). Also edits incorrectly charged L-seryl-tRNA(Thr). This chain is Threonine--tRNA ligase, found in Wolbachia sp. subsp. Drosophila simulans (strain wRi).